A 219-amino-acid chain; its full sequence is 3,4-dihydroxy-2-butanone 4-phosphate synthase (219 aa).

Residues 28–29 (RE), Asp-33, 140–144 (REGHT), and Glu-164 contribute to the D-ribulose 5-phosphate site. Glu-29 lines the Mg(2+) pocket. His-143 is a Mg(2+) binding site.

The protein belongs to the DHBP synthase family. Homodimer. Mg(2+) serves as cofactor. Requires Mn(2+) as cofactor.

The catalysed reaction is D-ribulose 5-phosphate = (2S)-2-hydroxy-3-oxobutyl phosphate + formate + H(+). It participates in cofactor biosynthesis; riboflavin biosynthesis; 2-hydroxy-3-oxobutyl phosphate from D-ribulose 5-phosphate: step 1/1. In terms of biological role, catalyzes the conversion of D-ribulose 5-phosphate to formate and 3,4-dihydroxy-2-butanone 4-phosphate. The protein is 3,4-dihydroxy-2-butanone 4-phosphate synthase of Methanocorpusculum labreanum (strain ATCC 43576 / DSM 4855 / Z).